The sequence spans 498 residues: Tumor necrosis factor receptor superfamily member 8 (498 aa).

Residues 1–18 (MSALLTAAGLLFLGMLQA) form the signal peptide. At 19-287 (FPTDRPLKTT…STGTPFLDPG (269 aa)) the chain is on the extracellular side. TNFR-Cys repeat units follow at residues 68–105 (QCAP…PRIC) and 106–146 (ECQP…DTIC). 5 disulfides stabilise this stretch: Cys-69–Cys-81, Cys-84–Cys-97, Cys-87–Cys-105, Cys-107–Cys-121, and Cys-128–Cys-146. Residues 142 to 168 (KDTICELPSSGSGPNCSNPGDRKTLTS) are disordered. Low complexity predominate over residues 149 to 160 (PSSGSGPNCSNP). N-linked (GlcNAc...) asparagine glycosylation is found at Asn-156, Asn-183, and Asn-229. The segment at 204-256 (ELVKVPESSSSKAREPSPDPGNAEKNMTLELPSPGTLPDISTSENSKEPASTA) is disordered. Positions 242-256 (DISTSENSKEPASTA) are enriched in polar residues. Residues 288–308 (PVLFWVAMVVLLVGSGSFLLC) traverse the membrane as a helical segment. The Cytoplasmic portion of the chain corresponds to 309-498 (YWKACRRRFQ…DHGPTTVSEK (190 aa)). A compositionally biased stretch (polar residues) spans 338 to 358 (DSCPTEKLTQPQRSGSVTDPS). Disordered regions lie at residues 338 to 370 (DSCP…SPPP), 389 to 411 (LDDS…VSTE), and 436 to 498 (EVPE…VSEK). Residues Ser-339 and Ser-353 each carry the phosphoserine modification. 3 stretches are compositionally biased toward basic and acidic residues: residues 402-411 (EPPEPRVSTE), 456-465 (EVDHAPHYPE), and 484-498 (EGGK…VSEK).

It belongs to the TNFR8 family. As to quaternary structure, interacts with TRAF1, TRAF2, TRAF3 and TRAF5. As to expression, detected in thymus and in activated splenocytes.

It is found in the cell membrane. Its function is as follows. Receptor for TNFSF8/CD30L. May play a role in the regulation of cellular growth and transformation of activated lymphoblasts. Regulates gene expression through activation of NF-kappa-B. The polypeptide is Tumor necrosis factor receptor superfamily member 8 (Mus musculus (Mouse)).